A 444-amino-acid chain; its full sequence is Tubulin beta chain (444 aa).

The MREI motif signature appears at 1-4 (MREI). Residues Q11, E69, S138, G142, T143, G144, N204, and N226 each contribute to the GTP site. Position 69 (E69) interacts with Mg(2+). The interval 421–444 (EYQQYQDATAEEEEDFNEEAEEEA) is disordered. Positions 429–444 (TAEEEEDFNEEAEEEA) are enriched in acidic residues. E438 bears the 5-glutamyl polyglutamate mark.

This sequence belongs to the tubulin family. As to quaternary structure, dimer of alpha and beta chains. A typical microtubule is a hollow water-filled tube with an outer diameter of 25 nm and an inner diameter of 15 nM. Alpha-beta heterodimers associate head-to-tail to form protofilaments running lengthwise along the microtubule wall with the beta-tubulin subunit facing the microtubule plus end conferring a structural polarity. Microtubules usually have 13 protofilaments but different protofilament numbers can be found in some organisms and specialized cells. Requires Mg(2+) as cofactor. In terms of processing, some glutamate residues at the C-terminus are polyglycylated, resulting in polyglycine chains on the gamma-carboxyl group. Glycylation is mainly limited to tubulin incorporated into axonemes (cilia and flagella) whereas glutamylation is prevalent in neuronal cells, centrioles, axonemes, and the mitotic spindle. Both modifications can coexist on the same protein on adjacent residues, and lowering polyglycylation levels increases polyglutamylation, and reciprocally. The precise function of polyglycylation is still unclear. Some glutamate residues at the C-terminus are polyglutamylated, resulting in polyglutamate chains on the gamma-carboxyl group. Polyglutamylation plays a key role in microtubule severing by spastin (SPAST). SPAST preferentially recognizes and acts on microtubules decorated with short polyglutamate tails: severing activity by SPAST increases as the number of glutamates per tubulin rises from one to eight, but decreases beyond this glutamylation threshold.

It is found in the cytoplasm. It localises to the cytoskeleton. Functionally, tubulin is the major constituent of microtubules, a cylinder consisting of laterally associated linear protofilaments composed of alpha- and beta-tubulin heterodimers. Microtubules grow by the addition of GTP-tubulin dimers to the microtubule end, where a stabilizing cap forms. Below the cap, tubulin dimers are in GDP-bound state, owing to GTPase activity of alpha-tubulin. In Xenopus laevis (African clawed frog), this protein is Tubulin beta chain (tubb).